Here is a 211-residue protein sequence, read N- to C-terminus: ATP phosphoribosyltransferase (211 aa).

This sequence belongs to the ATP phosphoribosyltransferase family. Short subfamily. In terms of assembly, heteromultimer composed of HisG and HisZ subunits.

The protein localises to the cytoplasm. It catalyses the reaction 1-(5-phospho-beta-D-ribosyl)-ATP + diphosphate = 5-phospho-alpha-D-ribose 1-diphosphate + ATP. Its pathway is amino-acid biosynthesis; L-histidine biosynthesis; L-histidine from 5-phospho-alpha-D-ribose 1-diphosphate: step 1/9. In terms of biological role, catalyzes the condensation of ATP and 5-phosphoribose 1-diphosphate to form N'-(5'-phosphoribosyl)-ATP (PR-ATP). Has a crucial role in the pathway because the rate of histidine biosynthesis seems to be controlled primarily by regulation of HisG enzymatic activity. This is ATP phosphoribosyltransferase from Pseudomonas paraeruginosa (strain DSM 24068 / PA7) (Pseudomonas aeruginosa (strain PA7)).